A 456-amino-acid polypeptide reads, in one-letter code: Taurine--pyruvate aminotransferase (456 aa).

N6-(pyridoxal phosphate)lysine is present on lysine 280.

The protein belongs to the class-III pyridoxal-phosphate-dependent aminotransferase family. Homotetramer. Requires pyridoxal 5'-phosphate as cofactor.

It carries out the reaction taurine + pyruvate = sulfoacetaldehyde + L-alanine. It participates in organosulfur degradation; alkanesulfonate degradation. Its function is as follows. Involved in an anaerobic respiration pathway that converts the sulfonate taurine (2-aminoethanesulfonate) to ammonia, acetate and sulfide. Catalyzes the initial metabolic reaction of anaerobic taurine degradation, i.e. the transamination reaction between taurine and pyruvate leading to sulfoacetaldehyde and alanine. The protein is Taurine--pyruvate aminotransferase of Bilophila wadsworthia (strain 3_1_6).